A 443-amino-acid polypeptide reads, in one-letter code: MSEMTPREIVSELNRHIIGQDKAKRAVAIALRNRWRRMQLEESLRVEVTPKNILMIGPTGVGKTEIARRLAKLANAPFIKVEATKFTEVGYVGKEVESIIRDLTDVAVKLTHQQAMEKVKFRAEELAEERVLDALLPPPRDAWGQAEQKEENSSTRQVFRKKLREGQLNDKEIEINVAVPQMGVEIMAPPGMEEMTNQLQGLFQNLAGDTKKKRKMKIKDALKALVEEEAAKLVNQEELKEQAIYNVENNGIVFIDEIDKICKRGEVSGPDVSREGVQRDLLPLIEGSTVSTKHGMVRTDHILFIASGAFQVAKPSDLIPELQGRLPIRVELEALSSNDFKRILTEPKASLTEQYVALMKTEQVDVQFTEDGIKQIADAAWQVNETTENIGARRLHTVLERLMDEISFDATEKAGQAFVIDAAYVKARLGELVEDEDLSRFIL.

ATP-binding positions include Ile-18, 60–65, Asp-256, Glu-321, and Arg-393; that span reads GVGKTE.

It belongs to the ClpX chaperone family. HslU subfamily. A double ring-shaped homohexamer of HslV is capped on each side by a ring-shaped HslU homohexamer. The assembly of the HslU/HslV complex is dependent on binding of ATP.

The protein localises to the cytoplasm. In terms of biological role, ATPase subunit of a proteasome-like degradation complex; this subunit has chaperone activity. The binding of ATP and its subsequent hydrolysis by HslU are essential for unfolding of protein substrates subsequently hydrolyzed by HslV. HslU recognizes the N-terminal part of its protein substrates and unfolds these before they are guided to HslV for hydrolysis. The sequence is that of ATP-dependent protease ATPase subunit HslU from Vibrio cholerae serotype O1 (strain ATCC 39541 / Classical Ogawa 395 / O395).